A 264-amino-acid chain; its full sequence is COP9 signalosome complex subunit 7b (264 aa).

Alanine 2 bears the N-acetylalanine mark. One can recognise a PCI domain in the interval 2-159 (AGEQKPSSNL…QLLEVDFCIG (158 aa)). The stretch at 194-237 (RANQYKENHSRTQQQVEAEVTNIKKTLKATASSSAQEMEQQLAE) forms a coiled coil. Residues 223 to 232 (TASSSAQEME) show a composition bias toward polar residues. The tract at residues 223–264 (TASSSAQEMEQQLAERECPPHAEQRQPTKKMSKVKGLVSSRH) is disordered. A compositionally biased stretch (basic and acidic residues) spans 235-248 (LAERECPPHAEQRQ).

The protein belongs to the CSN7/EIF3M family. CSN7 subfamily. In terms of assembly, component of the CSN complex, composed of COPS1/GPS1, COPS2, COPS3, COPS4, COPS5, COPS6, COPS7 (COPS7A or COPS7B), COPS8 and COPS9. In the complex, it probably interacts directly with COPS1, COPS2, COPS4, COPS5, COPS6 and COPS8. Interacts with EIF3S6.

It localises to the cytoplasm. It is found in the nucleus. Its function is as follows. Component of the COP9 signalosome complex (CSN), a complex involved in various cellular and developmental processes. The CSN complex is an essential regulator of the ubiquitin (Ubl) conjugation pathway by mediating the deneddylation of the cullin subunits of SCF-type E3 ligase complexes, leading to decrease the Ubl ligase activity of SCF-type complexes such as SCF, CSA or DDB2. The complex is also involved in phosphorylation of p53/TP53, JUN, I-kappa-B-alpha/NFKBIA, ITPK1 and IRF8/ICSBP, possibly via its association with CK2 and PKD kinases. CSN-dependent phosphorylation of TP53 and JUN promotes and protects degradation by the Ubl system, respectively. This Bos taurus (Bovine) protein is COP9 signalosome complex subunit 7b (COPS7B).